A 312-amino-acid chain; its full sequence is Olfactory receptor 4K17 (312 aa).

Residues 1–25 (MKLLNQSQVSEFILLGLTSSQDVEF) lie on the Extracellular side of the membrane. A glycan (N-linked (GlcNAc...) asparagine) is linked at Asn-5. Residues 26-49 (LLFALFSVIYVVTVLGNLLIIVTV) traverse the membrane as a helical segment. Over 50–57 (FNTPNLNT) the chain is Cytoplasmic. The helical transmembrane segment at 58–79 (PMYFLLGNLSFVDMTLASFATP) threads the bilayer. The Extracellular segment spans residues 80–100 (KVILNLLKKQKVISFAGCFTQ). A disulfide bridge links Cys-97 with Cys-189. The helical transmembrane segment at 101 to 120 (IFLLHLLGGVEMVLLVSMAF) threads the bilayer. Over 121-139 (DRYVAICKPLHYMTIMNKK) the chain is Cytoplasmic. The chain crosses the membrane as a helical span at residues 140–158 (VCVLLVVTSWLLGLLHSGF). The Extracellular portion of the chain corresponds to 159–195 (QIPFAVNLPFCGPNVVDSIFCDLPLVTKLACIDIYFV). Residues 196–219 (QVVIVANSGIISLSCFIILLISYS) traverse the membrane as a helical segment. The Cytoplasmic segment spans residues 220-235 (LILITIKNHSPTGQSK). Residues 236–258 (ARSTLTAHITVVILFFGPCIFIY) form a helical membrane-spanning segment. Residues 259–269 (IWPFGNHSVDK) lie on the Extracellular side of the membrane. Asn-264 is a glycosylation site (N-linked (GlcNAc...) asparagine). The chain crosses the membrane as a helical span at residues 270 to 289 (FLAVFYTIITPILNPIIYTL). Topologically, residues 290–312 (RNKEMKISMKKLWRAFVNSREDT) are cytoplasmic.

This sequence belongs to the G-protein coupled receptor 1 family.

It localises to the cell membrane. Functionally, odorant receptor. In Homo sapiens (Human), this protein is Olfactory receptor 4K17 (OR4K17).